A 289-amino-acid polypeptide reads, in one-letter code: Probable porphobilinogen deaminase (289 aa).

Cys233 carries the post-translational modification S-(dipyrrolylmethanemethyl)cysteine.

This sequence belongs to the HMBS family. Requires dipyrromethane as cofactor.

The enzyme catalyses 4 porphobilinogen + H2O = hydroxymethylbilane + 4 NH4(+). It participates in porphyrin-containing compound metabolism; protoporphyrin-IX biosynthesis; coproporphyrinogen-III from 5-aminolevulinate: step 2/4. In terms of biological role, tetrapolymerization of the monopyrrole PBG into the hydroxymethylbilane pre-uroporphyrinogen in several discrete steps. The sequence is that of Probable porphobilinogen deaminase (hemC) from Methanothermobacter thermautotrophicus (strain ATCC 29096 / DSM 1053 / JCM 10044 / NBRC 100330 / Delta H) (Methanobacterium thermoautotrophicum).